The sequence spans 418 residues: Thyroxine-binding globulin (418 aa).

Positions 1 to 20 (MSMFFYLFLLVLGLQATIHC) are cleaved as a signal peptide. N24, N39, N102, N168, N227, and N256 each carry an N-linked (GlcNAc...) asparagine glycan. Residues N296 and K401 each contribute to the thyroxine site.

The protein belongs to the serpin family. In terms of tissue distribution, expressed by the liver and secreted in plasma.

It localises to the secreted. In terms of biological role, major thyroid hormone transport protein in serum. The polypeptide is Thyroxine-binding globulin (Serpina7) (Rattus norvegicus (Rat)).